Reading from the N-terminus, the 339-residue chain is Ketol-acid reductoisomerase (NADP(+)) (339 aa).

The KARI N-terminal Rossmann domain occupies 1 to 182 (MRVYYDRDAD…GGGRAGIIET (182 aa)). NADP(+) contacts are provided by residues 24-27 (YGSQ), Arg48, Ser51, Ser53, and 83-86 (DELQ). The active site involves His108. Gly134 contributes to the NADP(+) binding site. A KARI C-terminal knotted domain is found at 183–328 (TFREECETDL…AKLRDMMPWI (146 aa)). 4 residues coordinate Mg(2+): Asp191, Glu195, Glu227, and Glu231. Substrate is bound at residue Ser252.

It belongs to the ketol-acid reductoisomerase family. Requires Mg(2+) as cofactor.

It catalyses the reaction (2R)-2,3-dihydroxy-3-methylbutanoate + NADP(+) = (2S)-2-acetolactate + NADPH + H(+). The catalysed reaction is (2R,3R)-2,3-dihydroxy-3-methylpentanoate + NADP(+) = (S)-2-ethyl-2-hydroxy-3-oxobutanoate + NADPH + H(+). Its pathway is amino-acid biosynthesis; L-isoleucine biosynthesis; L-isoleucine from 2-oxobutanoate: step 2/4. It functions in the pathway amino-acid biosynthesis; L-valine biosynthesis; L-valine from pyruvate: step 2/4. Involved in the biosynthesis of branched-chain amino acids (BCAA). Catalyzes an alkyl-migration followed by a ketol-acid reduction of (S)-2-acetolactate (S2AL) to yield (R)-2,3-dihydroxy-isovalerate. In the isomerase reaction, S2AL is rearranged via a Mg-dependent methyl migration to produce 3-hydroxy-3-methyl-2-ketobutyrate (HMKB). In the reductase reaction, this 2-ketoacid undergoes a metal-dependent reduction by NADPH to yield (R)-2,3-dihydroxy-isovalerate. In Rhodopseudomonas palustris (strain ATCC BAA-98 / CGA009), this protein is Ketol-acid reductoisomerase (NADP(+)).